Consider the following 469-residue polypeptide: Putative dipeptidase SAB1611c (469 aa).

Residue His-84 coordinates Zn(2+). Residue Asp-86 is part of the active site. Asp-115 provides a ligand contact to Zn(2+). The Proton acceptor role is filled by Glu-149. 3 residues coordinate Zn(2+): Glu-150, Asp-173, and His-440.

The protein belongs to the peptidase M20A family. The cofactor is Zn(2+).

The sequence is that of Putative dipeptidase SAB1611c from Staphylococcus aureus (strain bovine RF122 / ET3-1).